The sequence spans 327 residues: tRNA N6-adenosine threonylcarbamoyltransferase (327 aa).

Fe cation is bound by residues His109 and His113. Substrate-binding positions include 132–136, Asp165, Gly178, Asp182, and Asn268; that span reads MVSGG. Fe cation is bound at residue Asp296.

The protein belongs to the KAE1 / TsaD family. It depends on Fe(2+) as a cofactor.

Its subcellular location is the cytoplasm. It catalyses the reaction L-threonylcarbamoyladenylate + adenosine(37) in tRNA = N(6)-L-threonylcarbamoyladenosine(37) in tRNA + AMP + H(+). Required for the formation of a threonylcarbamoyl group on adenosine at position 37 (t(6)A37) in tRNAs that read codons beginning with adenine. Is involved in the transfer of the threonylcarbamoyl moiety of threonylcarbamoyl-AMP (TC-AMP) to the N6 group of A37, together with TsaE and TsaB. TsaD likely plays a direct catalytic role in this reaction. The sequence is that of tRNA N6-adenosine threonylcarbamoyltransferase from Thermotoga petrophila (strain ATCC BAA-488 / DSM 13995 / JCM 10881 / RKU-1).